We begin with the raw amino-acid sequence, 415 residues long: 2-oxoadipate dioxygenase/decarboxylase (415 aa).

3 residues coordinate 2-oxoadipate: His66, Arg70, and His225. Fe(2+) is bound at residue His66. 2 residues coordinate Fe(2+): His225 and Glu296. Ala361 lines the 2-oxoadipate pocket.

The protein belongs to the 2-oxoadipate dioxygenase/decarboxylase family. The cofactor is Fe(2+).

It catalyses the reaction 2-oxoadipate + O2 = (R)-2-hydroxyglutarate + CO2. Functionally, catalyzes the decarboxylation and hydroxylation of 2-oxoadipate (2OA) to form D-2-hydroxyglutarate (D-2-HGA). In Mycobacterium bovis (strain ATCC BAA-935 / AF2122/97), this protein is 2-oxoadipate dioxygenase/decarboxylase.